The following is an 891-amino-acid chain: Targeting protein for Xklp2 homolog (891 aa).

Residues 42-54 are compositionally biased toward basic and acidic residues; the sequence is HENGVPLTFDDKA. Disordered stretches follow at residues 42–310, 418–454, 472–518, 723–746, and 789–891; these read HENG…KSCP, NLRK…SFSG, HTKT…NRHR, CSGV…AEKG, and STKP…SHTS. A compositionally biased stretch (polar residues) spans 108–124; it reads DDVSSAESETCEMSTDS. Over residues 141–154 the composition is skewed to acidic residues; sequence DDEATVQESSDAEE. The segment covering 155 to 173 has biased composition (polar residues); it reads TQTLPSSCVDSSTAEMSTD. The span at 236-246 shows a compositional bias: basic residues; it reads PTRKSPRLHSR. The segment covering 442 to 454 has biased composition (basic and acidic residues); that stretch reads DNRKRTHEESFSG. Positions 791–802 are enriched in polar residues; the sequence is KPMTDISNFSLN. Basic and acidic residues-rich tracts occupy residues 803–822 and 831–852; these read TERR…ERQL and REAE…DSIH.

The protein belongs to the TPX2 family. In terms of tissue distribution, detectable in immature oocytes.

The protein localises to the nucleus. It localises to the cytoplasm. The protein resides in the cytoskeleton. It is found in the spindle. Its function is as follows. Spindle assembly factor. Required for normal assembly of mitotic spindles. This is Targeting protein for Xklp2 homolog from Patiria pectinifera (Starfish).